The sequence spans 137 residues: 6,7-dimethyl-8-ribityllumazine synthase (137 aa).

5-amino-6-(D-ribitylamino)uracil contacts are provided by residues F11, 43 to 45 (SFD), and 67 to 69 (CVI). Position 72-73 (72-73 (DT)) interacts with (2S)-2-hydroxy-3-oxobutyl phosphate. H75 (proton donor) is an active-site residue. Residue L100 participates in 5-amino-6-(D-ribitylamino)uracil binding. A (2S)-2-hydroxy-3-oxobutyl phosphate-binding site is contributed by R115.

The protein belongs to the DMRL synthase family. As to quaternary structure, forms an icosahedral capsid composed of 60 subunits, arranged as a dodecamer of pentamers.

The enzyme catalyses (2S)-2-hydroxy-3-oxobutyl phosphate + 5-amino-6-(D-ribitylamino)uracil = 6,7-dimethyl-8-(1-D-ribityl)lumazine + phosphate + 2 H2O + H(+). The protein operates within cofactor biosynthesis; riboflavin biosynthesis; riboflavin from 2-hydroxy-3-oxobutyl phosphate and 5-amino-6-(D-ribitylamino)uracil: step 1/2. Its function is as follows. Catalyzes the formation of 6,7-dimethyl-8-ribityllumazine by condensation of 5-amino-6-(D-ribitylamino)uracil with 3,4-dihydroxy-2-butanone 4-phosphate. This is the penultimate step in the biosynthesis of riboflavin. This is 6,7-dimethyl-8-ribityllumazine synthase from Methanococcus maripaludis (strain C6 / ATCC BAA-1332).